The primary structure comprises 181 residues: CASP-like protein 1F2 (181 aa).

At 1 to 18 (MADIETKSSQNQPLKTQN) the chain is on the cytoplasmic side. A helical transmembrane segment spans residues 19–39 (IFIGAQIFLRIVVIAASFAST). At 40 to 70 (WLMLTNKQTIDIGGFVLDANYSYSPEFKFLS) the chain is on the extracellular side. N-linked (GlcNAc...) asparagine glycosylation is present at asparagine 59. The helical transmembrane segment at 71–91 (YANIVVGAFSFVSLLFLVLVG) threads the bilayer. The Cytoplasmic portion of the chain corresponds to 92–100 (RRSSNPTYY). Residues 101-121 (FILFLHDLALMSLVLGGCAAA) form a helical membrane-spanning segment. At 122–150 (TVIGSLGKYGNSHTGWMQICDHFGKFCKR) the chain is on the extracellular side. A helical membrane pass occupies residues 151–171 (ATTSVAFSYFSLVCLLILTIT). Topologically, residues 172–181 (SASKSRQIQV) are cytoplasmic.

This sequence belongs to the Casparian strip membrane proteins (CASP) family. As to quaternary structure, homodimer and heterodimers.

Its subcellular location is the cell membrane. The chain is CASP-like protein 1F2 from Populus trichocarpa (Western balsam poplar).